The sequence spans 466 residues: Uronate isomerase (466 aa).

This sequence belongs to the metallo-dependent hydrolases superfamily. Uronate isomerase family.

It catalyses the reaction D-glucuronate = D-fructuronate. It carries out the reaction aldehydo-D-galacturonate = keto-D-tagaturonate. It functions in the pathway carbohydrate metabolism; pentose and glucuronate interconversion. The sequence is that of Uronate isomerase from Streptococcus agalactiae serotype V (strain ATCC BAA-611 / 2603 V/R).